Here is a 68-residue protein sequence, read N- to C-terminus: Protein DsrB (68 aa).

Belongs to the DsrB family.

This is Protein DsrB from Sodalis glossinidius (strain morsitans).